The sequence spans 327 residues: Serum response factor homolog (327 aa).

Residues 12-43 are disordered; it reads QKLQNASPALPEGTSSTPTPSSSTGLLPNGKK. Positions 25-35 are enriched in low complexity; it reads TSSTPTPSSST. The MADS-box domain occupies 45–105; the sequence is KGRVKIKMEY…GHVYTYATPK (61 aa). Residues 189 to 225 form a disordered region; that stretch reads TFGEDDYNNDESGDDSDSEEASSDIKEEYQGSPTMVK. The segment covering 191-210 has biased composition (acidic residues); sequence GEDDYNNDESGDDSDSEEAS.

As to expression, expressed in muscle, varying with age, decreasing twofold during the first week of adulthood.

The protein resides in the nucleus. Functionally, transcription factor. Regulates myogenesis, in cooperation with transcription factors hlh-1 and hnd-1. Required for maintenance of muscle in adulthood. The polypeptide is Serum response factor homolog (Caenorhabditis elegans).